Consider the following 118-residue polypeptide: Large ribosomal subunit protein bL20 (118 aa).

Belongs to the bacterial ribosomal protein bL20 family.

Its function is as follows. Binds directly to 23S ribosomal RNA and is necessary for the in vitro assembly process of the 50S ribosomal subunit. It is not involved in the protein synthesizing functions of that subunit. This Macrococcus caseolyticus (strain JCSC5402) (Macrococcoides caseolyticum) protein is Large ribosomal subunit protein bL20.